The sequence spans 559 residues: Glucose-6-phosphate isomerase (559 aa).

The active-site Proton donor is Glu352. Catalysis depends on residues His383 and Lys511.

It belongs to the GPI family.

The protein localises to the cytoplasm. It catalyses the reaction alpha-D-glucose 6-phosphate = beta-D-fructose 6-phosphate. It participates in carbohydrate biosynthesis; gluconeogenesis. Its pathway is carbohydrate degradation; glycolysis; D-glyceraldehyde 3-phosphate and glycerone phosphate from D-glucose: step 2/4. Catalyzes the reversible isomerization of glucose-6-phosphate to fructose-6-phosphate. The chain is Glucose-6-phosphate isomerase from Chlorobaculum tepidum (strain ATCC 49652 / DSM 12025 / NBRC 103806 / TLS) (Chlorobium tepidum).